Reading from the N-terminus, the 339-residue chain is Phenylalanine--tRNA ligase alpha subunit (339 aa).

Glu254 is a Mg(2+) binding site.

Belongs to the class-II aminoacyl-tRNA synthetase family. Phe-tRNA synthetase alpha subunit type 1 subfamily. In terms of assembly, tetramer of two alpha and two beta subunits. Mg(2+) is required as a cofactor.

The protein resides in the cytoplasm. It carries out the reaction tRNA(Phe) + L-phenylalanine + ATP = L-phenylalanyl-tRNA(Phe) + AMP + diphosphate + H(+). This chain is Phenylalanine--tRNA ligase alpha subunit, found in Clostridium botulinum (strain 657 / Type Ba4).